The following is a 142-amino-acid chain: Group IIE secretory phospholipase A2 (142 aa).

Residues 1–19 form the signal peptide; that stretch reads MKSPHVLVFLCLLVALVTG. The Ca(2+) site is built by aspartate 41, glycine 43, tyrosine 45, glycine 47, and glycine 49. Cystine bridges form between cysteine 44/cysteine 135, cysteine 46/cysteine 62, cysteine 61/cysteine 115, cysteine 67/cysteine 142, cysteine 68/cysteine 108, cysteine 77/cysteine 101, and cysteine 95/cysteine 106. Histidine 65 is a catalytic residue. Ca(2+) is bound at residue aspartate 66. Residue aspartate 109 is part of the active site. Ca(2+)-binding residues include tyrosine 130 and asparagine 132.

It belongs to the phospholipase A2 family. Requires Ca(2+) as cofactor. In terms of tissue distribution, restricted to the brain, heart, lung, and placenta.

The protein resides in the secreted. It is found in the cytoplasm. The enzyme catalyses a 1,2-diacyl-sn-glycero-3-phosphoethanolamine + H2O = a 1-acyl-sn-glycero-3-phosphoethanolamine + a fatty acid + H(+). The catalysed reaction is 1-hexadecanoyl-2-(9Z-octadecenoyl)-sn-glycero-3-phosphoethanolamine + H2O = 1-hexadecanoyl-sn-glycero-3-phosphoethanolamine + (9Z)-octadecenoate + H(+). It catalyses the reaction 1-hexadecanoyl-2-(9Z,12Z-octadecadienoyl)-sn-glycero-3-phosphoethanolamine + H2O = 1-hexadecanoyl-sn-glycero-3-phosphoethanolamine + (9Z,12Z)-octadecadienoate + H(+). It carries out the reaction 1-hexadecanoyl-2-(5Z,8Z,11Z,14Z-eicosatetraenoyl)-sn-glycero-3-phosphoethanolamine + H2O = 1-hexadecanoyl-sn-glycero-3-phosphoethanolamine + (5Z,8Z,11Z,14Z)-eicosatetraenoate + H(+). The enzyme catalyses 1,2-dihexadecanoyl-sn-glycero-3-phospho-(1'-sn-glycerol) + H2O = 1-hexadecanoyl-sn-glycero-3-phospho-(1'-sn-glycerol) + hexadecanoate + H(+). The catalysed reaction is 1-hexadecanoyl-2-(9Z-octadecenoyl)-sn-glycero-3-phosphoglycerol + H2O = 1-hexadecanoyl-sn-glycero-3-phosphoglycerol + (9Z)-octadecenoate + H(+). It catalyses the reaction a 1,2-diacyl-sn-glycero-3-phosphocholine + H2O = a 1-acyl-sn-glycero-3-phosphocholine + a fatty acid + H(+). It carries out the reaction 1,2-dihexadecanoyl-sn-glycero-3-phosphocholine + H2O = 1-hexadecanoyl-sn-glycero-3-phosphocholine + hexadecanoate + H(+). The enzyme catalyses 1-hexadecanoyl-2-(9Z-octadecenoyl)-sn-glycero-3-phosphocholine + H2O = 1-hexadecanoyl-sn-glycero-3-phosphocholine + (9Z)-octadecenoate + H(+). The catalysed reaction is 1-hexadecanoyl-2-(9Z,12Z-octadecadienoyl)-sn-glycero-3-phosphocholine + H2O = (9Z,12Z)-octadecadienoate + 1-hexadecanoyl-sn-glycero-3-phosphocholine + H(+). It catalyses the reaction 1-hexadecanoyl-2-(4Z,7Z,10Z,13Z,16Z,19Z-docosahexaenoyl)-sn-glycero-3-phosphocholine + H2O = (4Z,7Z,10Z,13Z,16Z,19Z)-docosahexaenoate + 1-hexadecanoyl-sn-glycero-3-phosphocholine + H(+). Functionally, secretory calcium-dependent phospholipase A2 that primarily targets extracellular phospholipids. Hydrolyzes the ester bond of the fatty acyl group attached at sn-2 position of phospholipids (phospholipase A2 activity), releasing various unsaturated fatty acids including oleoate, linoleoate, arachidonate, docosahexaenoate and lysophosphatidylethanolamines in preference to lysophosphatidylcholines. In response to high-fat diet, hydrolyzes minor lipoprotein phospholipids including phosphatidylserines, phosphatidylinositols and phosphatidylglycerols, altering lipoprotein composition and fat storage in adipose tissue and liver. May act in an autocrine and paracrine manner. Contributes to lipid remodeling of cellular membranes and generation of lipid mediators involved in pathogen clearance. Cleaves sn-2 fatty acyl chains of phosphatidylglycerols and phosphatidylethanolamines, which are major components of membrane phospholipids in bacteria. Acts as a hair follicle phospholipase A2. Selectively releases lysophosphatidylethanolamines (LPE) and various unsaturated fatty acids in skin to regulate hair follicle homeostasis. May regulate the inflammatory response by releasing arachidonate, a precursor of prostaglandins and leukotrienes. Upon allergen exposure, may participate in allergic inflammatory response by enhancing leukotriene C4 synthesis and degranulation in mast cells. The sequence is that of Group IIE secretory phospholipase A2 (PLA2G2E) from Homo sapiens (Human).